The primary structure comprises 526 residues: D-arabinono-1,4-lactone oxidase (526 aa).

The FAD-binding PCMH-type domain occupies 19-193; that stretch reads YSAKPERYFQ…VSATIRVVPG (175 aa). Pros-8alpha-FAD histidine is present on H56.

This sequence belongs to the oxygen-dependent FAD-linked oxidoreductase family. In terms of assembly, monomer. Requires FAD as cofactor. In terms of processing, the N-terminus is blocked.

It is found in the mitochondrion membrane. It carries out the reaction D-arabinono-1,4-lactone + O2 = dehydro-D-arabinono-1,4-lactone + H2O2 + H(+). It participates in cofactor biosynthesis; D-erythroascorbate biosynthesis; dehydro-D-arabinono-1,4-lactone from D-arabinose: step 2/2. Its function is as follows. Can oxidize L-gulono-1,4-lactone as well as D-arabinono-1,4-lactone and L-galactono-1,4-lactone. This Saccharomyces cerevisiae (strain ATCC 204508 / S288c) (Baker's yeast) protein is D-arabinono-1,4-lactone oxidase (ALO1).